The following is a 561-amino-acid chain: V-type proton ATPase catalytic subunit A (561 aa).

Position 190–197 (190–197 (GAFGCGKT)) interacts with ATP.

Belongs to the ATPase alpha/beta chains family. V-ATPase is a heteromultimeric enzyme composed of a peripheral catalytic V1 complex (main components: subunits A, B, C, D, E, and F) attached to an integral membrane V0 proton pore complex (main component: the proteolipid protein). As to expression, high expression in the mesocotyl tip of etiolated seedlings compared to the base.

The enzyme catalyses ATP + H2O + 4 H(+)(in) = ADP + phosphate + 5 H(+)(out). In terms of biological role, catalytic subunit of the peripheral V1 complex of vacuolar ATPase. V-ATPase vacuolar ATPase is responsible for acidifying a variety of intracellular compartments in eukaryotic cells. The protein is V-type proton ATPase catalytic subunit A of Zea mays (Maize).